The following is a 183-amino-acid chain: Outer membrane protein H.8 (183 aa).

A signal peptide spans 1-17 (MKAYLALISAAVIGLAA). A lipid anchor (N-palmitoyl cysteine) is attached at Cys-18. The S-diacylglycerol cysteine moiety is linked to residue Cys-18. The tract at residues 27–51 (AEATPAAEAPASEAPAAEAAPADAA) is disordered. The Plastocyanin-like domain maps to 57–183 (GNCAATVESN…LMNGKVTLVD (127 aa)). Positions 102, 166, 171, and 175 each coordinate Cu cation.

Requires Cu cation as cofactor.

The protein resides in the cell outer membrane. The chain is Outer membrane protein H.8 from Neisseria meningitidis serogroup C / serotype 2a (strain ATCC 700532 / DSM 15464 / FAM18).